The following is a 312-amino-acid chain: Olfactory receptor 10C1 (312 aa).

Over 1 to 24 the chain is Extracellular; it reads MSANTSMVTEFLLLGFSHLADLQG. Residue asparagine 4 is glycosylated (N-linked (GlcNAc...) asparagine). A helical membrane pass occupies residues 25 to 45; that stretch reads LLFSVFLTIYLLTVAGNFLIV. Residues 46 to 53 lie on the Cytoplasmic side of the membrane; sequence VLVSTDAA. A helical transmembrane segment spans residues 54-74; sequence LQSPMYFFLRTLSALEIGYTS. Topologically, residues 75–98 are extracellular; that stretch reads VTVPLLLHHLLTGRRHISRSGCAL. A disulfide bridge links cysteine 96 with cysteine 188. Residues 99 to 119 traverse the membrane as a helical segment; the sequence is QMFFFLFFGATECCLLAAMAY. The Cytoplasmic segment spans residues 120-138; the sequence is DRYAAICEPLRYPLLLSHR. A helical transmembrane segment spans residues 139-159; the sequence is VCLQLAGSAWACGVLVGLGHT. Residues 160–196 lie on the Extracellular side of the membrane; it reads PFIFSLPFCGPNTIPQFFCEIQPVLQLVCGDTSLNEL. A helical transmembrane segment spans residues 197–216; that stretch reads QIILATALLILCPFGLILGS. Residues 217–236 are Cytoplasmic-facing; the sequence is YGRILVTIFRIPSVAGRRKA. Residues 237-257 traverse the membrane as a helical segment; that stretch reads FSTCSSHLIMVSLFYGTALFI. Topologically, residues 258–270 are extracellular; it reads YIRPKASYDPATD. The helical transmembrane segment at 271 to 291 threads the bilayer; it reads PLVSLFYAVVTPILNPIIYSL. Topologically, residues 292–312 are cytoplasmic; it reads RNTEVKAALKRTIQKTVPMEI.

Belongs to the G-protein coupled receptor 1 family.

The protein resides in the cell membrane. Its function is as follows. Odorant receptor. This chain is Olfactory receptor 10C1 (OR10C1), found in Homo sapiens (Human).